Reading from the N-terminus, the 490-residue chain is Protein twist (490 aa).

Disordered regions lie at residues 48–72 (QLQHQQQHLHSHQHHQQHHQQQHAQ), 96–165 (PSNE…TGGS), and 244–264 (QQQQSQQLQQQQPHQQSHAQM). A compositionally biased stretch (basic residues) spans 54-68 (QHLHSHQHHQQHHQQ). Composition is skewed to low complexity over residues 102 to 134 (STSSNQSAQSTSLELNNNNTSSNTNSSGNNPSG) and 244 to 263 (QQQQSQQLQQQQPHQQSHAQ). Serine 325 and serine 328 each carry phosphoserine. The disordered stretch occupies residues 330-361 (LDGSDAGGKAFRKPRRRLKRKPSKTEETDEFS). Residues 339–351 (AFRKPRRRLKRKP) are compositionally biased toward basic residues. In terms of domain architecture, bHLH spans 362–413 (NQRVMANVRERQRTQSLNDAFKSLQQIIPTLPSDKLSKIQTLKLATRYIDFL).

As to quaternary structure, efficient DNA binding requires dimerization with another bHLH protein. Homodimer. Interacts with akirin. Expressed in embryonic abdomen; a single cell ventrally, pairs of cells laterally and three cells dorsally in each hemisegment. In the thorax, there are patches of cells associated with the imaginal disks. During larval development, cells proliferate and, in the abdomen, they form ventral, lateral and dorsal clusters, which are the precursors of the adult abdominal muscles. In the thorax, they form populations of cells in the imaginal disks that correspond to the adepithelial cells.

It is found in the nucleus. In terms of biological role, involved in the establishment and dorsoventral patterning of germ layers in the embryo. The sequence is that of Protein twist (twi) from Drosophila melanogaster (Fruit fly).